The primary structure comprises 156 residues: Regulatory protein RecX (156 aa).

The protein belongs to the RecX family.

The protein resides in the cytoplasm. Modulates RecA activity. The sequence is that of Regulatory protein RecX from Pseudomonas putida (strain ATCC 700007 / DSM 6899 / JCM 31910 / BCRC 17059 / LMG 24140 / F1).